Here is a 149-residue protein sequence, read N- to C-terminus: UPF0208 membrane protein PBPRA2797 (149 aa).

Transmembrane regions (helical) follow at residues 41 to 60 (FATRVMPAVAVMSVLSQMAF) and 65 to 87 (ALPQAMTVALFALTMPLQGLWWL).

Belongs to the UPF0208 family.

It is found in the cell inner membrane. The protein is UPF0208 membrane protein PBPRA2797 of Photobacterium profundum (strain SS9).